The chain runs to 511 residues: Maturase K (511 aa).

The protein belongs to the intron maturase 2 family. MatK subfamily.

It is found in the plastid. The protein localises to the chloroplast. Usually encoded in the trnK tRNA gene intron. Probably assists in splicing its own and other chloroplast group II introns. This is Maturase K from Oryza nivara (Indian wild rice).